The chain runs to 420 residues: Polymerase delta-interacting protein 3 (420 aa).

A2 is subject to N-acetylalanine. S5 bears the Phosphoserine mark. Residue R33 is modified to Omega-N-methylarginine. The residue at position 127 (S127) is a Phosphoserine. A Phosphothreonine modification is found at T140. K200 participates in a covalent cross-link: Glycyl lysine isopeptide (Lys-Gly) (interchain with G-Cter in SUMO2). S215 and S217 each carry phosphoserine. A Glycyl lysine isopeptide (Lys-Gly) (interchain with G-Cter in SUMO2) cross-link involves residue K223. Residue S244 is modified to Phosphoserine. K248 participates in a covalent cross-link: Glycyl lysine isopeptide (Lys-Gly) (interchain with G-Cter in SUMO2). The interval 256 to 277 (TLVNKEEPPKELPPAEPVLSPL) is disordered. S275 is subject to Phosphoserine. An RRM domain is found at 280-351 (TKMTVNNLHP…QPMKCNLHMN (72 aa)). Positions 369 to 394 (PSVKKESELPRRGNPASSNPPAEVDP) are disordered. Basic and acidic residues predominate over residues 370–379 (SVKKESELPR). Residue K372 forms a Glycyl lysine isopeptide (Lys-Gly) (interchain with G-Cter in SUMO2) linkage. S385 is modified (phosphoserine). K417 participates in a covalent cross-link: Glycyl lysine isopeptide (Lys-Gly) (interchain with G-Cter in SUMO2).

Interacts with POLD2. Interacts with NCBP1 and EIF4A3. Associates with the multiprotein exon junction complex (EJC). Interacts with RPS6KB1 (activated). Interacts with ERH. Interacts with THOC2, DDX39B and ZC3H11A; the interactions are ATP-dependent and indicative for an association with the TREX complex.

The protein localises to the nucleus. It localises to the nucleus speckle. The protein resides in the cytoplasm. Is involved in regulation of translation. Is preferentially associated with CBC-bound spliced mRNA-protein complexes during the pioneer round of mRNA translation. Contributes to enhanced translational efficiency of spliced over nonspliced mRNAs. Recruits activated ribosomal protein S6 kinase beta-1 I/RPS6KB1 to newly synthesized mRNA. Involved in nuclear mRNA export; probably mediated by association with the TREX complex. This chain is Polymerase delta-interacting protein 3 (Poldip3), found in Mus musculus (Mouse).